Consider the following 305-residue polypeptide: tRNA pseudouridine synthase B (305 aa).

Asp39 functions as the Nucleophile in the catalytic mechanism.

Belongs to the pseudouridine synthase TruB family. Type 1 subfamily.

The catalysed reaction is uridine(55) in tRNA = pseudouridine(55) in tRNA. Its function is as follows. Responsible for synthesis of pseudouridine from uracil-55 in the psi GC loop of transfer RNAs. This chain is tRNA pseudouridine synthase B, found in Staphylococcus saprophyticus subsp. saprophyticus (strain ATCC 15305 / DSM 20229 / NCIMB 8711 / NCTC 7292 / S-41).